Here is a 61-residue protein sequence, read N- to C-terminus: UPF0434 protein Pfl01_4174 (61 aa).

Belongs to the UPF0434 family.

The polypeptide is UPF0434 protein Pfl01_4174 (Pseudomonas fluorescens (strain Pf0-1)).